Reading from the N-terminus, the 361-residue chain is Arginine N(omega)-methyltransferase (361 aa).

The segment covering 1–17 (MRHVQEARAVPAEHEAR) has biased composition (basic and acidic residues). The segment at 1–24 (MRHVQEARAVPAEHEARPAPVTMP) is disordered. The 297-residue stretch at 65-361 (DADAFAQIAR…WSDFTLRVSI (297 aa)) folds into the SAM-dependent MTase PRMT-type domain.

The protein belongs to the class I-like SAM-binding methyltransferase superfamily. Protein arginine N-methyltransferase family.

The enzyme catalyses L-arginine + S-adenosyl-L-methionine = N(omega)-methyl-L-arginine + S-adenosyl-L-homocysteine + H(+). The protein operates within antibiotic biosynthesis. Functionally, involved in the biosynthesis of the glucosamine-nitrosourea antibiotic streptozotocin (SZN). Catalyzes the conversion of L-arginine to N(omega)-methyl-L-arginine (L-NMA), using S-adenosyl-L-methionine (SAM) as a methyl donor. The polypeptide is Arginine N(omega)-methyltransferase (Streptomyces achromogenes subsp. streptozoticus).